A 252-amino-acid polypeptide reads, in one-letter code: Large ribosomal subunit protein uL29m (252 aa).

The residue at position 146 (Lys-146) is an N6-acetyllysine.

This sequence belongs to the universal ribosomal protein uL29 family. Component of the mitochondrial ribosome large subunit (39S) which comprises a 16S rRNA and about 50 distinct proteins.

The protein resides in the mitochondrion. In Bos taurus (Bovine), this protein is Large ribosomal subunit protein uL29m (MRPL47).